The chain runs to 570 residues: Urease subunit alpha (570 aa).

A Urease domain is found at 131–570 (GGVDTHIHFI…LPMAQRYFLF (440 aa)). Ni(2+) contacts are provided by histidine 136, histidine 138, and lysine 219. Lysine 219 is modified (N6-carboxylysine). Histidine 221 contacts substrate. Residues histidine 248 and histidine 274 each contribute to the Ni(2+) site. Catalysis depends on histidine 322, which acts as the Proton donor. Position 362 (aspartate 362) interacts with Ni(2+).

It belongs to the metallo-dependent hydrolases superfamily. Urease alpha subunit family. In terms of assembly, heterotrimer of UreA (gamma), UreB (beta) and UreC (alpha) subunits. Three heterotrimers associate to form the active enzyme. Ni cation serves as cofactor. In terms of processing, carboxylation allows a single lysine to coordinate two nickel ions.

It localises to the cytoplasm. It catalyses the reaction urea + 2 H2O + H(+) = hydrogencarbonate + 2 NH4(+). It functions in the pathway nitrogen metabolism; urea degradation; CO(2) and NH(3) from urea (urease route): step 1/1. In Methylocella silvestris (strain DSM 15510 / CIP 108128 / LMG 27833 / NCIMB 13906 / BL2), this protein is Urease subunit alpha.